The chain runs to 1257 residues: Period circadian protein homolog 2 (1257 aa).

Residues 1 to 59 are disordered; the sequence is MNGYVDFSPSPTSPTQEPGEPQPTQAVLQEDVDMSSGSSGNENCSTGRDSQGSDCDDSG. Residues 8-25 show a composition bias toward low complexity; it reads SPSPTSPTQEPGEPQPTQ. The segment covering 35–53 has biased composition (polar residues); that stretch reads SSGSSGNENCSTGRDSQGS. Positions 109–118 match the Nuclear export signal 1 motif; that stretch reads LIRTLRELKV. One can recognise a PAS 1 domain in the interval 179–246; that stretch reads ITSEYIVKNS…FHSYTTPYKL (68 aa). The short motif at 306 to 310 is the LXXLL element; it reads LCCLL. One can recognise a PAS 2 domain in the interval 319–385; that stretch reads YEAPRIPPEK…MLAIHKKILQ (67 aa). The region spanning 393-436 is the PAC domain; it reads YSPIRFRTRNGEYITLDTSWSSFINPWSRKISFIIGRHKVRVGP. A Nuclear export signal 2 motif is present at residues 460–469; the sequence is LTEQIHRLLM. The tract at residues 471–567 is disordered; it reads PVPHSGSSGY…RDSSGASLPK (97 aa). Residues 478-482 form an important for protein stability region; it reads SGYGS. 2 stretches are compositionally biased toward polar residues: residues 493–504 and 518–528; these read MSQTSSSDSNGQ and SGKSQSKSHFS. Residues 510–709 are CSNK1E binding domain; that stretch reads RRSGIFKTSG…DAAGGLSQEK (200 aa). Phosphoserine is present on residues Ser-525, Ser-528, Ser-531, Ser-538, and Ser-544. Positions 541–555 are enriched in polar residues; sequence EMQSSPPAQVRSVTT. Thr-554 carries the phosphothreonine modification. A phosphoserine mark is found at Ser-659, Ser-693, Ser-697, Ser-706, Ser-758, and Ser-763. Disordered stretches follow at residues 678–706 and 757–833; these read DKKP…GGLS and RSRA…CPSA. Positions 778–794 match the Nuclear localization signal motif; sequence KKTGKNRKLKSKRVKTR. The span at 779–792 shows a compositional bias: basic residues; the sequence is KTGKNRKLKSKRVK. Over residues 821 to 832 the composition is skewed to low complexity; the sequence is SPSDTSQSSCPS. Thr-858 carries the post-translational modification Phosphothreonine. Positions 882-1067 are interaction with PPARG; that stretch reads EFAVQPLPFA…DLCSATGSAL (186 aa). The residue at position 939 (Ser-939) is a Phosphoserine. Residue Thr-964 is modified to Phosphothreonine. The residue at position 971 (Ser-971) is a Phosphoserine. The short motif at 983–990 is the Nuclear export signal 3 element; that stretch reads LQLNLLQL. The disordered stretch occupies residues 993–1044; sequence APESSTGAAGTLGTTGTAASGLDCTSGASRDRQPKAPPTCSEPSDTQNSDAI. A compositionally biased stretch (low complexity) spans 996 to 1014; that stretch reads SSTGAAGTLGTTGTAASGL. A compositionally biased stretch (polar residues) spans 1033–1044; that stretch reads SEPSDTQNSDAI. The short motif at 1051 to 1055 is the LXXLL element; the sequence is LNLLL. A compositionally biased stretch (low complexity) spans 1070–1089; it reads SGASATSDSLGSSSLGCDTS. The segment at 1070–1108 is disordered; the sequence is SGASATSDSLGSSSLGCDTSRSGAGSSDTSHTSKYFGSI. Residues 1090 to 1108 show a composition bias toward polar residues; the sequence is RSGAGSSDTSHTSKYFGSI. Ser-1126 is modified (phosphoserine). The interval 1157–1257 is CRY binding domain; the sequence is SRDLQAVLKE…LANPRKEAQT (101 aa). Positions 1226 to 1257 are disordered; it reads EEDSPSLGLCDTSEAKEEESGQLANPRKEAQT.

Homodimer. Component of the circadian core oscillator, which includes the CRY proteins, CLOCK or NPAS2, BMAL1 or BMAL2, CSNK1D and/or CSNK1E, TIMELESS, and the PER proteins. Interacts with CLOCK-BMAL1 (off DNA). Interacts directly with PER1 and PER3, and through a C-terminal domain, with CRY1 and CRY2. Interacts (via PAS 2 domain) with TIMELESS. Interacts with NFIL3. Different large complexes have been identified with different repressive functions. The core of PER complexes is composed of at least PER1, PER2, PER3, CRY1, CRY2, CSNK1D and/or CSNK1E. The large PER complex involved in the repression of transcriptional termination is composed of at least PER2, CDK9, DDX5, DHX9, NCBP1 and POLR2A (active). The large PER complex involved in the histone deacetylation is composed of at least HDAC1, PER2, SFPQ and SIN3A. The large PER complex involved in the histone methylation is composed of at least PER2, CBX3, TRIM28, SUV39H1 and/or SUV39H2; CBX3 mediates the formation of the complex. Interacts with SETX; the interaction inhibits termination of circadian target genes. Interacts with the nuclear receptors HNF4A, NR1D1, NR4A2, RORA, PPARA, PPARG and THRA; the interaction with at least PPARG is ligand dependent. Interacts with PML. Interacts (phosphorylated) with BTRC and FBXW11; the interactions trigger proteasomal degradation. Interacts with NONO and SFPQ. Interacts with CAVIN3. Interacts with MAGEL2. Interacts with MAP1LC3B. Interacts with HNF4A. In terms of processing, acetylated. Deacetylated by SIRT1, resulting in decreased protein stability. Deacetylated by SIRT6, preventing its degradation by the proteasome, resulting in increased protein stability. Phosphorylated by CSNK1E and CSNK1D. Phosphorylation results in PER2 protein degradation. May be dephosphorylated by PP1. Post-translationally, ubiquitinated, leading to its proteasomal degradation. Ubiquitination may be inhibited by CRY1. Expressed in all tissues examined including eye, brain, heart, lung, spleen, liver, pancreas and kidney. In the CNS, highly expressed in the SCN, internal granular layer of granular cells of the olfactory bulb, tuberculum olfactorium, piriform cortex, gyrus dentatus of the hippocampus, cerebellum, pars tuberalis/median eminence, and pituitary, and moderately in the tenia tecta, caudate putamen, accumbens nucleus, superior and inferior colliculus and pineal gland.

Its subcellular location is the nucleus. The protein localises to the cytoplasm. The protein resides in the perinuclear region. Its function is as follows. Transcriptional repressor which forms a core component of the circadian clock. The circadian clock, an internal time-keeping system, regulates various physiological processes through the generation of approximately 24 hour circadian rhythms in gene expression, which are translated into rhythms in metabolism and behavior. It is derived from the Latin roots 'circa' (about) and 'diem' (day) and acts as an important regulator of a wide array of physiological functions including metabolism, sleep, body temperature, blood pressure, endocrine, immune, cardiovascular, and renal function. Consists of two major components: the central clock, residing in the suprachiasmatic nucleus (SCN) of the brain, and the peripheral clocks that are present in nearly every tissue and organ system. Both the central and peripheral clocks can be reset by environmental cues, also known as Zeitgebers (German for 'timegivers'). The predominant Zeitgeber for the central clock is light, which is sensed by retina and signals directly to the SCN. The central clock entrains the peripheral clocks through neuronal and hormonal signals, body temperature and feeding-related cues, aligning all clocks with the external light/dark cycle. Circadian rhythms allow an organism to achieve temporal homeostasis with its environment at the molecular level by regulating gene expression to create a peak of protein expression once every 24 hours to control when a particular physiological process is most active with respect to the solar day. Transcription and translation of core clock components (CLOCK, NPAS2, BMAL1, BMAL2, PER1, PER2, PER3, CRY1 and CRY2) plays a critical role in rhythm generation, whereas delays imposed by post-translational modifications (PTMs) are important for determining the period (tau) of the rhythms (tau refers to the period of a rhythm and is the length, in time, of one complete cycle). A diurnal rhythm is synchronized with the day/night cycle, while the ultradian and infradian rhythms have a period shorter and longer than 24 hours, respectively. Disruptions in the circadian rhythms contribute to the pathology of cardiovascular diseases, cancer, metabolic syndrome and aging. A transcription/translation feedback loop (TTFL) forms the core of the molecular circadian clock mechanism. Transcription factors, CLOCK or NPAS2 and BMAL1 or BMAL2, form the positive limb of the feedback loop, act in the form of a heterodimer and activate the transcription of core clock genes and clock-controlled genes (involved in key metabolic processes), harboring E-box elements (5'-CACGTG-3') within their promoters. The core clock genes: PER1/2/3 and CRY1/2 which are transcriptional repressors form the negative limb of the feedback loop and interact with the CLOCK|NPAS2-BMAL1|BMAL2 heterodimer inhibiting its activity and thereby negatively regulating their own expression. This heterodimer also activates nuclear receptors NR1D1/2 and RORA/B/G, which form a second feedback loop and which activate and repress BMAL1 transcription, respectively. PER1 and PER2 proteins transport CRY1 and CRY2 into the nucleus with appropriate circadian timing, but also contribute directly to repression of clock-controlled target genes through interaction with several classes of RNA-binding proteins, helicases and others transcriptional repressors. PER appears to regulate circadian control of transcription by at least three different modes. First, interacts directly with the CLOCK-BMAL1 at the tail end of the nascent transcript peak to recruit complexes containing the SIN3-HDAC that remodel chromatin to repress transcription. Second, brings H3K9 methyltransferases such as SUV39H1 and SUV39H2 to the E-box elements of the circadian target genes, like PER2 itself or PER1. The recruitment of each repressive modifier to the DNA seems to be very precisely temporally orchestrated by the large PER complex, the deacetylases acting before than the methyltransferases. Additionally, large PER complexes are also recruited to the target genes 3' termination site through interactions with RNA-binding proteins and helicases that may play a role in transcription termination to regulate transcription independently of CLOCK-BMAL1 interactions. Recruitment of large PER complexes to the elongating polymerase at PER and CRY termination sites inhibited SETX action, impeding RNA polymerase II release and thereby repressing transcriptional reinitiation. May propagate clock information to metabolic pathways via the interaction with nuclear receptors. Coactivator of PPARA and corepressor of NR1D1, binds rhythmically at the promoter of nuclear receptors target genes like BMAL1 or G6PC1. Directly and specifically represses PPARG proadipogenic activity by blocking PPARG recruitment to target promoters and thereby transcriptional activation. Required for fatty acid and lipid metabolism, is involved as well in the regulation of circulating insulin levels. Plays an important role in the maintenance of cardiovascular functions through the regulation of NO and vasodilatatory prostaglandins production in aortas. Controls circadian glutamate uptake in synaptic vesicles through the regulation of VGLUT1 expression. May also be involved in the regulation of inflammatory processes. Represses the CLOCK-BMAL1 induced transcription of BHLHE40/DEC1 and ATF4. Negatively regulates the formation of the TIMELESS-CRY1 complex by competing with TIMELESS for binding to CRY1. The protein is Period circadian protein homolog 2 of Rattus norvegicus (Rat).